The chain runs to 1507 residues: Protein similar (1507 aa).

The disordered stretch occupies residues 1 to 85; that stretch reads MVSLIDTIEA…KSRDAARCRR (85 aa). Residues 26–49 show a composition bias toward low complexity; sequence SASSSSCSSSFSSSPPSSSVGSPS. Residues 72–85 are compositionally biased toward basic and acidic residues; that stretch reads KRKEKSRDAARCRR. Residues 72-125 enclose the bHLH domain; that stretch reads KRKEKSRDAARCRRSKETEIFMELSAALPLKTDDVNQLDKASVMRITIAFLKIR. 2 PAS domains span residues 167–240 and 307–377; these read NGAE…LAQK and PHPS…LSKG. The PAC domain occupies 381-422; sequence TSRYRFLGKYGGYCWILSQATIVYDKLKPQSVVCVNYVISNL. 4 disordered regions span residues 433-459, 541-588, 706-832, and 900-951; these read QQTAASEQKEQHHQAAETEKEPEKAAD, HSPG…PPPT, TCST…CSPN, and YAGN…QAAV. The span at 439–459 shows a compositional bias: basic and acidic residues; that stretch reads EQKEQHHQAAETEKEPEKAAD. Polar residues predominate over residues 548-559; sequence ITAQLLSGSSSG. Residues 578–588 are compositionally biased toward pro residues; sequence SPAPPLTPPPT. Residues 692–863 are ODD; that stretch reads TCLLPEDINS…IDDDMPLLTE (172 aa). The span at 706-717 shows a compositional bias: polar residues; the sequence is TCSTTASGQHYQ. Composition is skewed to low complexity over residues 718 to 745 and 754 to 777; these read SPSSSSTSAPSNTSSSNNSYANSPLSPL and SNPSHQQQQQHHNQQQQQQQQQQH. Residues 803-818 show a composition bias toward polar residues; sequence DTSCSQHLHSPSITSK. Composition is skewed to low complexity over residues 823-832, 907-918, and 926-951; these read SSLPSLCSPN, QQQQQQPQLQQQ, and SSPASTVSSLSPSPVQQHHQQQQAAV. Residues 880 to 908 are a coiled coil; that stretch reads KEIDAIQQQLQQLQQQHHQQYAGNTGYQQ. Coiled coils occupy residues 982–1054 and 1110–1162; these read AEEC…YDVQ and QLLQ…QLQQ. Disordered regions lie at residues 1204–1228, 1251–1287, and 1356–1460; these read PQQQQHGNKRHLNSATGAGNPVESK, KDPAQQQTQAAKRAGSERWQLSAESKQQKQQQQQSNS, and FGGS…KTSI. A compositionally biased stretch (polar residues) spans 1413 to 1423; that stretch reads SSTSNSTNQAE.

In terms of assembly, efficient DNA binding requires dimerization with another bHLH protein. Interacts with Vhl. Ubiquitously expressed in the embryo.

It is found in the cytoplasm. Its subcellular location is the nucleus. Functionally, functions as a transcriptional regulator of the adaptive response to hypoxia. Binds to core DNA sequence 5'-[AG]CGTG-3' within the hypoxia response element (HRE) of target gene promoters. The polypeptide is Protein similar (sima) (Drosophila melanogaster (Fruit fly)).